A 309-amino-acid polypeptide reads, in one-letter code: Homoserine O-succinyltransferase (309 aa).

Cysteine 142 serves as the catalytic Acyl-thioester intermediate. 2 residues coordinate substrate: lysine 163 and serine 192. The active-site Proton acceptor is the histidine 235. Residue glutamate 237 is part of the active site. Residue arginine 249 coordinates substrate.

It belongs to the MetA family. In terms of assembly, homodimer.

The protein resides in the cytoplasm. The catalysed reaction is L-homoserine + succinyl-CoA = O-succinyl-L-homoserine + CoA. It participates in amino-acid biosynthesis; L-methionine biosynthesis via de novo pathway; O-succinyl-L-homoserine from L-homoserine: step 1/1. Transfers a succinyl group from succinyl-CoA to L-homoserine, forming succinyl-L-homoserine. The polypeptide is Homoserine O-succinyltransferase (Shigella sonnei (strain Ss046)).